Reading from the N-terminus, the 210-residue chain is Ribosomal RNA large subunit methyltransferase E (210 aa).

G67, W69, D87, D103, and D128 together coordinate S-adenosyl-L-methionine. The Proton acceptor role is filled by K168.

Belongs to the class I-like SAM-binding methyltransferase superfamily. RNA methyltransferase RlmE family.

The protein localises to the cytoplasm. It carries out the reaction uridine(2552) in 23S rRNA + S-adenosyl-L-methionine = 2'-O-methyluridine(2552) in 23S rRNA + S-adenosyl-L-homocysteine + H(+). Its function is as follows. Specifically methylates the uridine in position 2552 of 23S rRNA at the 2'-O position of the ribose in the fully assembled 50S ribosomal subunit. The protein is Ribosomal RNA large subunit methyltransferase E of Psychrobacter arcticus (strain DSM 17307 / VKM B-2377 / 273-4).